A 118-amino-acid polypeptide reads, in one-letter code: Large ribosomal subunit protein bL17 (118 aa).

This sequence belongs to the bacterial ribosomal protein bL17 family. As to quaternary structure, part of the 50S ribosomal subunit. Contacts protein L32.

The chain is Large ribosomal subunit protein bL17 from Phytoplasma australiense.